Reading from the N-terminus, the 251-residue chain is Putative (5-formylfuran-3-yl)methyl phosphate synthase (251 aa).

The Schiff-base intermediate with substrate role is filled by K29. The active-site Proton acceptor is the K87.

It belongs to the MfnB family.

The enzyme catalyses 2 D-glyceraldehyde 3-phosphate = 4-(hydroxymethyl)-2-furancarboxaldehyde phosphate + phosphate + 2 H2O. Catalyzes the formation of 4-(hydroxymethyl)-2-furancarboxaldehyde phosphate (4-HFC-P) from two molecules of glyceraldehyde-3-P (GA-3-P). The chain is Putative (5-formylfuran-3-yl)methyl phosphate synthase from Kitasatospora aureofaciens (Streptomyces aureofaciens).